Reading from the N-terminus, the 501-residue chain is E3 ubiquitin-protein ligase TRIM35 (501 aa).

M1 is subject to N-acetylmethionine. Residue S8 is modified to Phosphoserine. An RING-type zinc finger spans residues 21–61 (CAVCYDPFRDAVTLRCGHNFCRRCVSGCWEVQTTPSCPVCK). The B box-type zinc-finger motif lies at 96–137 (RSPRPCRAHRAPLTLFCVEDKELLCCACQADARHQEHRVQPI). C101, H104, C123, and H129 together coordinate Zn(2+). A coiled-coil region spans residues 209–252 (MKEESRKKHLLAEEKMKQLAEQTEALAREIERLQMEMKEDDMTF). Residues 284 to 495 (LESLQYRVWK…LRICHLRVSI (212 aa)) enclose the B30.2/SPRY domain.

Interacts with PKM isoform M2, but not isoform M1; this interaction may compete with that between PKM and FGFR1, and hence reduces FGFR1-dependent tyrosine phosphorylation of PKM. Interacts with IRF7; this interaction promotes IRF7 proteasomal degradation. Interacts with TRAF3; this interaction promotes TRAF3 activation.

Its subcellular location is the cytoplasm. The protein resides in the nucleus. The enzyme catalyses S-ubiquitinyl-[E2 ubiquitin-conjugating enzyme]-L-cysteine + [acceptor protein]-L-lysine = [E2 ubiquitin-conjugating enzyme]-L-cysteine + N(6)-ubiquitinyl-[acceptor protein]-L-lysine.. It participates in protein modification; protein ubiquitination. Functionally, E3 ubiquitin-protein ligase that participates in multiple biological processes including cell death, glucose metabolism, and in particular, the innate immune response. Mediates 'Lys-63'-linked polyubiquitination of TRAF3 thereby promoting type I interferon production via RIG-I signaling pathway. Can also catalyze 'Lys-48'-linked polyubiquitination and proteasomal degradation of viral proteins such as influenza virus PB2. Acts as a negative feedback regulator of TLR7- and TLR9-triggered signaling. Mechanistically, promotes the 'Lys-48'-linked ubiquitination of IRF7 and induces its degradation via a proteasome-dependent pathway. Reduces FGFR1-dependent tyrosine phosphorylation of PKM, inhibiting PKM-dependent lactate production, glucose metabolism, and cell growth. This Rattus norvegicus (Rat) protein is E3 ubiquitin-protein ligase TRIM35 (Trim35).